A 404-amino-acid chain; its full sequence is Odorant receptor 67c (404 aa).

Residues 1–45 (METAKDNTARTFMELMRVPVQFYRTIGEDIYAHRSTNPLKSLLFK) lie on the Cytoplasmic side of the membrane. Residues 46 to 66 (IYLYAGFINFNLLVIGELVFF) traverse the membrane as a helical segment. Residues 67–79 (YNSIQDFETIRLA) are Extracellular-facing. The helical transmembrane segment at 80–100 (IAVAPCIGFSLVADFKQAAMI) threads the bilayer. Residues 101–139 (RGKKTLIMLLDDLENMHPKTLAKQMEYKLPDFEKTMKRV) lie on the Cytoplasmic side of the membrane. Residues 140 to 160 (INIFTFLCLAYTTTFSFYPAI) form a helical membrane-spanning segment. Over 161-204 (KASVKFNFLGYDTFDRNFGFLIWFPFDATRNNLIYWIMYWDIAH) the chain is Extracellular. The helical transmembrane segment at 205-225 (GAYLAGIAFLCADLLLVVVIT) threads the bilayer. Residues 226 to 277 (QICMHFNYISMRLEDHPCNSNEDKENIEFLIGIIRYHDKCLKLCEHVNDLYS) lie on the Cytoplasmic side of the membrane. A helical transmembrane segment spans residues 278 to 298 (FSLLLNFLMASMQICFIAFQV). The Extracellular portion of the chain corresponds to 299 to 304 (TESTVE). The helical transmembrane segment at 305-326 (VIIIYCIFLMTSMVQVFMVCYY) threads the bilayer. The Cytoplasmic portion of the chain corresponds to 327-373 (GDTLIAASLKVGDAAYNQKWFQCSKSYCTMLKLLIMRSQKPASIRPP). A helical membrane pass occupies residues 374–394 (TFPPISLVTYMKVISMSYQFF). Topologically, residues 395-404 (ALLRTTYSNN) are extracellular.

The protein belongs to the insect chemoreceptor superfamily. Heteromeric odorant receptor channel (TC 1.A.69) family. Or49a subfamily. In terms of assembly, interacts with Orco. Complexes exist early in the endomembrane system in olfactory sensory neurons (OSNs), coupling these complexes to the conserved ciliary trafficking pathway. Expressed in olfactory sensory neurons in the antenna.

The protein localises to the cell membrane. Functionally, odorant receptor which mediates acceptance or avoidance behavior, depending on its substrates. The odorant receptor repertoire encodes a large collection of odor stimuli that vary widely in identity, intensity, and duration. May form a complex with Orco to form odorant-sensing units, providing sensitive and prolonged odorant signaling and calcium permeability. This is Odorant receptor 67c (Or67c) from Drosophila melanogaster (Fruit fly).